The primary structure comprises 78 residues: Short neurotoxin SNTX6 (78 aa).

Residues 1–21 (MKTLLLTFLVVTIVCLDLGYT) form the signal peptide. Cystine bridges form between Cys-24–Cys-40, Cys-33–Cys-58, Cys-62–Cys-70, and Cys-71–Cys-76.

It belongs to the three-finger toxin family. Short-chain subfamily. Expressed by the venom gland.

It is found in the secreted. Its function is as follows. This three-finger toxin binds and inhibits the nicotinic acetylcholine receptor (nAChR). The protein is Short neurotoxin SNTX6 of Ophiophagus hannah (King cobra).